Consider the following 259-residue polypeptide: Glutathione S-transferase domain-containing protein DDB_G0274705 (259 aa).

Residues 7–96 (KIDYIFYTNN…YLAQKFNTFL (90 aa)) enclose the GST N-terminal domain. The GST C-terminal domain occupies 102-232 (NPLENSEVIT…GFKNFNPSLL (131 aa)).

It belongs to the GST superfamily.

This is Glutathione S-transferase domain-containing protein DDB_G0274705 from Dictyostelium discoideum (Social amoeba).